The primary structure comprises 193 residues: Potassium-transporting ATPase KdpC subunit (193 aa).

A helical transmembrane segment spans residues 14 to 34 (ITFTFLVLCGLVYPLIVTGIA).

Belongs to the KdpC family. As to quaternary structure, the system is composed of three essential subunits: KdpA, KdpB and KdpC.

The protein resides in the cell membrane. Its function is as follows. Part of the high-affinity ATP-driven potassium transport (or Kdp) system, which catalyzes the hydrolysis of ATP coupled with the electrogenic transport of potassium into the cytoplasm. This subunit acts as a catalytic chaperone that increases the ATP-binding affinity of the ATP-hydrolyzing subunit KdpB by the formation of a transient KdpB/KdpC/ATP ternary complex. The chain is Potassium-transporting ATPase KdpC subunit from Bacillus cereus (strain G9842).